The chain runs to 95 residues: Protein TusB (95 aa).

This sequence belongs to the DsrH/TusB family. Heterohexamer, formed by a dimer of trimers. The hexameric TusBCD complex contains 2 copies each of TusB, TusC and TusD. The TusBCD complex interacts with TusE.

The protein resides in the cytoplasm. Functionally, part of a sulfur-relay system required for 2-thiolation of 5-methylaminomethyl-2-thiouridine (mnm(5)s(2)U) at tRNA wobble positions. The chain is Protein TusB from Escherichia coli (strain K12 / MC4100 / BW2952).